Consider the following 388-residue polypeptide: Spermidine/putrescine import ATP-binding protein PotA (388 aa).

Positions 17 to 247 constitute an ABC transporter domain; that stretch reads IEIDHVTKRF…PATVFVANFI (231 aa). 49–56 serves as a coordination point for ATP; the sequence is GPSGCGKT.

Belongs to the ABC transporter superfamily. Spermidine/putrescine importer (TC 3.A.1.11.1) family. The complex is composed of two ATP-binding proteins (PotA), two transmembrane proteins (PotB and PotC) and a solute-binding protein (PotD).

It is found in the cell membrane. It catalyses the reaction ATP + H2O + polyamine-[polyamine-binding protein]Side 1 = ADP + phosphate + polyamineSide 2 + [polyamine-binding protein]Side 1.. Functionally, part of the ABC transporter complex PotABCD involved in spermidine/putrescine import. Responsible for energy coupling to the transport system. This is Spermidine/putrescine import ATP-binding protein PotA from Mycobacterium sp. (strain KMS).